The sequence spans 78 residues: Small acidic protein 2 (78 aa).

In terms of tissue distribution, expressed in siliques and anthers.

Functionally, mediates responses to the synthetic auxin 2,4-dichlorophenoxyacetic acid (2,4-D). Not involved in the response to indole-3-acetic acid (IAA). May interact with RUB modification-related components and may regulate the culling-ring ubiquitin E3 ligase complex (CRL) activity. The sequence is that of Small acidic protein 2 (SMAP2) from Arabidopsis thaliana (Mouse-ear cress).